A 1023-amino-acid chain; its full sequence is Probable histidine kinase 3 (1023 aa).

Residues 1 to 80 lie on the Cytoplasmic side of the membrane; the sequence is MDEMSCGGGG…RGWRVVRETW (80 aa). Residues 81–101 traverse the membrane as a helical segment; sequence WWVLLLWILAGSLGSFYLFLF. Topologically, residues 102–387 are extracellular; the sequence is MNAQSLDKRR…CRFEKKPPWP (286 aa). The region spanning 151 to 352 is the CHASE domain; sequence TPSAIDQMTF…TNESPISMYG (202 aa). Residues 388–408 traverse the membrane as a helical segment; that stretch reads WLAITSSFGTLVIALLTGHIF. Topologically, residues 409-1023 are cytoplasmic; it reads QATVHRIAKV…RFFQNHDQVE (615 aa). The 271-residue stretch at 445 to 715 folds into the Histidine kinase domain; it reads TVSHEIRTPM…TFTFTAVLMR (271 aa). At H448 the chain carries Phosphohistidine; by autocatalysis. Response regulatory domains lie at 732 to 854 and 880 to 1016; these read NALV…RRAL and QIIV…ARFF. D783 carries the post-translational modification 4-aspartylphosphate. A disordered region spans residues 812-831; the sequence is LFLLGSSASSPKGGSDTSRE. Over residues 817–827 the composition is skewed to polar residues; that stretch reads SSASSPKGGSD. 4-aspartylphosphate is present on D930.

Activation probably requires a transfer of a phosphate group between a His in the transmitter domain and an Asp of the receiver domain. In terms of tissue distribution, highly expressed in young leaves and at lower levels in roots, mature leaves, stems and spikelets.

The protein localises to the cell membrane. The catalysed reaction is ATP + protein L-histidine = ADP + protein N-phospho-L-histidine.. Its function is as follows. Cytokinin receptor related to bacterial two-component regulators. Functions as a histidine kinase and transmits the stress signal to a downstream MAPK cascade. In Oryza sativa subsp. japonica (Rice), this protein is Probable histidine kinase 3.